The sequence spans 363 residues: Diheme-cytochrome-encapsulin shell fusion protein (363 aa).

The signal sequence occupies residues 1–36 (MVMGILNTFKKVYAVTGFFALLAVFSLSQVGSSAFA). Residues 37-74 (ACAKVDDCFSCHTTQELNAVHKNTPYQGQSCIVCHKAF) are diheme c-type cytochrome. Residues C44, C47, H48, C67, C70, and H71 each coordinate heme. Residues 75 to 94 (AADDTCSDAKDGRFAKISSE) form a linker region. An encapsulin domain region spans residues 95–363 (ININKEDWNK…KCPQAICTLE (269 aa)).

The protein belongs to the encapsulin family. Family 1 subfamily. As to quaternary structure, the encapsulin nanocompartment is probably formed by 180 monomers, with the N-terminus (diheme domain) inside. There are 36 pores where the pentamers meet as well as 3-fold axis channels and dimer channels. The cofactor is heme.

Its subcellular location is the encapsulin nanocompartment. In terms of biological role, fusion of the shell and cargo protein of a type 1 encapsulin nanocompartment. Protein missing its signal peptide makes 33 nm particles in E.coli (called cEnc), protein missing its signal peptide and diheme domain (residues 1-86, called Enc) makes 29 nm particles. The cEnc nancompartment encloses c-type heme. The cargo protein NIR-HAO (AC P0DV45) is probably targeted to the nanocompartment by its association with the diheme domain in cEnc; removal of the diheme domain in Enc halves the amount of cargo. This chain is Diheme-cytochrome-encapsulin shell fusion protein, found in Kuenenia stuttgartiensis.